The following is a 318-amino-acid chain: tRNA pseudouridine synthase B (318 aa).

D47 (nucleophile) is an active-site residue.

This sequence belongs to the pseudouridine synthase TruB family. Type 1 subfamily.

The catalysed reaction is uridine(55) in tRNA = pseudouridine(55) in tRNA. Functionally, responsible for synthesis of pseudouridine from uracil-55 in the psi GC loop of transfer RNAs. This Aliivibrio salmonicida (strain LFI1238) (Vibrio salmonicida (strain LFI1238)) protein is tRNA pseudouridine synthase B.